The chain runs to 313 residues: Carbamate kinase (313 aa).

Belongs to the carbamate kinase family.

It is found in the cytoplasm. It carries out the reaction hydrogencarbonate + NH4(+) + ATP = carbamoyl phosphate + ADP + H2O + H(+). It participates in metabolic intermediate metabolism; carbamoyl phosphate degradation; CO(2) and NH(3) from carbamoyl phosphate: step 1/1. The sequence is that of Carbamate kinase (arcC) from Oenococcus oeni (Leuconostoc oenos).